Consider the following 136-residue polypeptide: Peptide methionine sulfoxide reductase MsrB (136 aa).

A MsrB domain is found at 9–136; that stretch reads DAEWKALLAE…NSASLDFKKK (128 aa). Residues C53, C56, C102, and C105 each contribute to the Zn(2+) site. The active-site Nucleophile is the C125.

The protein belongs to the MsrB Met sulfoxide reductase family. Zn(2+) serves as cofactor.

The catalysed reaction is L-methionyl-[protein] + [thioredoxin]-disulfide + H2O = L-methionyl-(R)-S-oxide-[protein] + [thioredoxin]-dithiol. The polypeptide is Peptide methionine sulfoxide reductase MsrB (Variovorax paradoxus (strain S110)).